A 294-amino-acid polypeptide reads, in one-letter code: Beta-glucoside kinase (294 aa).

Residue 5–11 (AFDIGGT) participates in ATP binding.

This sequence belongs to the ROK (NagC/XylR) family.

It catalyses the reaction D-cellobiose + ATP = 6-phospho-beta-D-glucosyl-(1-&gt;4)-D-glucose + ADP + H(+). Functionally, catalyzes the ATP-dependent phosphorylation of cellobiose to produce cellobiose-6'-P. May have a dual role of kinase and transcriptional regulator of the cellobiose-PTS operon. The protein is Beta-glucoside kinase (bglK) of Listeria innocua serovar 6a (strain ATCC BAA-680 / CLIP 11262).